We begin with the raw amino-acid sequence, 660 residues long: Arginine--tRNA ligase, cytoplasmic (660 aa).

M1 carries the N-acetylmethionine modification. Residues 1-72 (MDALVAHCSA…QAERNKPTKT (72 aa)) form a could be involved in the assembly of the multisynthetase complex region. L-arginine-binding positions include 200–202 (SPN), H211, Y384, D388, and Q412. The short motif at 201–212 (PNIAKEMHVGHL) is the 'HIGH' region element. The interaction with tRNA stretch occupies residues 529–543 (NTAAYLLYAFTRIRS).

It belongs to the class-I aminoacyl-tRNA synthetase family. In terms of assembly, interacts (via N-terminus) with AIMP1 (via N-terminus); this stimulates its catalytic activity. Interacts (via N-terminus) with LARS2 (via C-terminus). Monomer. Part of a multisubunit complex that groups tRNA ligases for Arg (RARS1), Asp (DARS1), Gln (QARS1), Ile (IARS1), Leu (LARS1), Lys (KARS1), Met (MARS1) the bifunctional ligase for Glu and Pro (EPRS1) and the auxiliary subunits AIMP1/p43, AIMP2/p38 and EEF1E1/p18. Interacts with QARS1. Part of a complex composed of RARS1, QARS1 and AIMP1.

It localises to the cytoplasm. The protein localises to the cytosol. The enzyme catalyses tRNA(Arg) + L-arginine + ATP = L-arginyl-tRNA(Arg) + AMP + diphosphate. Its function is as follows. Forms part of a macromolecular complex that catalyzes the attachment of specific amino acids to cognate tRNAs during protein synthesis. Modulates the secretion of AIMP1 and may be involved in generation of the inflammatory cytokine EMAP2 from AIMP1. The chain is Arginine--tRNA ligase, cytoplasmic (RARS1) from Bos taurus (Bovine).